A 247-amino-acid polypeptide reads, in one-letter code: tRNA (guanine-N(1)-)-methyltransferase (247 aa).

Gly-126 is an S-adenosyl-L-methionine binding site.

It belongs to the RNA methyltransferase TrmD family. As to quaternary structure, homodimer.

The protein localises to the cytoplasm. It carries out the reaction guanosine(37) in tRNA + S-adenosyl-L-methionine = N(1)-methylguanosine(37) in tRNA + S-adenosyl-L-homocysteine + H(+). Functionally, specifically methylates guanosine-37 in various tRNAs. In Jannaschia sp. (strain CCS1), this protein is tRNA (guanine-N(1)-)-methyltransferase.